Here is a 388-residue protein sequence, read N- to C-terminus: Protein DVU_0534 (388 aa).

10 consecutive transmembrane segments (helical) span residues 10-31, 57-78, 89-106, 130-144, 166-191, 199-222, 254-265, 291-306, 316-328, and 354-368; these read LMTPGNIITGIILVMGLVLTVL, LLCGVALAAGGYVTSASCYLFG, AITTAFLGYFFVVVALNY, EVGLCVATYLTVLFV, LTLVLTIFGVVLSTLHQSSLGALFLI, LWYSSFLPVFFFISSMVAGLSMVI, AASFVLAGYFMI, MLGFVALPSFLYALGV, FASVLGVLGIVMN, and IGISVFIVTSIITVY.

Belongs to the NrfD family.

It localises to the cell membrane. In terms of biological role, HMWC (high-molecular-weight cytochrome c), ORF2, ORF3, ORF4, ORF5 and ORF6 in the HMC operon form a transmembrane protein complex that allows electron flow from the periplasmic hydrogenase to the cytoplasmic enzymes that catalyze reduction of sulfates. The chain is Protein DVU_0534 from Nitratidesulfovibrio vulgaris (strain ATCC 29579 / DSM 644 / CCUG 34227 / NCIMB 8303 / VKM B-1760 / Hildenborough) (Desulfovibrio vulgaris).